The sequence spans 337 residues: MEDERITSAEVQSPDEENEELSLRPQTLHQYIGQDQIKHELEVYIAAAKNREEALDHVLLYGPPGLGKTTLAMVIANEMNVQIRTTSGPAIEKPGDLVALLNELQPGDVLFIDEIHRLPKVVEEMLYSAMEDFFVDIVVGQGPTAHPIHFPLPPFTLIGATTRAGLLSAPLRDRFGIVEHMNYYNEADLANIVRRSAGIFNSHIDDQGAYEIASRSRGTPRISNRLLKRIRDFAEVENDGQIDRQLVSQSLKLLQVDNRGLDRTDKKVLTTMIELYGGGPVGISTIAANIGEEPDTISEMYEPYLLQIGFLKRTPRGRMVTERAYEHLGLIDQYMNK.

A disordered region spans residues 1 to 22; sequence MEDERITSAEVQSPDEENEELS. The large ATPase domain (RuvB-L) stretch occupies residues 1-184; the sequence is MEDERITSAE…FGIVEHMNYY (184 aa). ATP is bound by residues leucine 23, arginine 24, glycine 65, lysine 68, threonine 69, threonine 70, 131-133, arginine 174, tyrosine 184, and arginine 221; that span reads EDF. Threonine 69 lines the Mg(2+) pocket. The tract at residues 185 to 255 is small ATPAse domain (RuvB-S); it reads NEADLANIVR…LVSQSLKLLQ (71 aa). Positions 258–337 are head domain (RuvB-H); sequence NRGLDRTDKK…LGLIDQYMNK (80 aa). Residues arginine 313 and arginine 318 each contribute to the DNA site.

It belongs to the RuvB family. Homohexamer. Forms an RuvA(8)-RuvB(12)-Holliday junction (HJ) complex. HJ DNA is sandwiched between 2 RuvA tetramers; dsDNA enters through RuvA and exits via RuvB. An RuvB hexamer assembles on each DNA strand where it exits the tetramer. Each RuvB hexamer is contacted by two RuvA subunits (via domain III) on 2 adjacent RuvB subunits; this complex drives branch migration. In the full resolvosome a probable DNA-RuvA(4)-RuvB(12)-RuvC(2) complex forms which resolves the HJ.

It localises to the cytoplasm. It catalyses the reaction ATP + H2O = ADP + phosphate + H(+). Its function is as follows. The RuvA-RuvB-RuvC complex processes Holliday junction (HJ) DNA during genetic recombination and DNA repair, while the RuvA-RuvB complex plays an important role in the rescue of blocked DNA replication forks via replication fork reversal (RFR). RuvA specifically binds to HJ cruciform DNA, conferring on it an open structure. The RuvB hexamer acts as an ATP-dependent pump, pulling dsDNA into and through the RuvAB complex. RuvB forms 2 homohexamers on either side of HJ DNA bound by 1 or 2 RuvA tetramers; 4 subunits per hexamer contact DNA at a time. Coordinated motions by a converter formed by DNA-disengaged RuvB subunits stimulates ATP hydrolysis and nucleotide exchange. Immobilization of the converter enables RuvB to convert the ATP-contained energy into a lever motion, pulling 2 nucleotides of DNA out of the RuvA tetramer per ATP hydrolyzed, thus driving DNA branch migration. The RuvB motors rotate together with the DNA substrate, which together with the progressing nucleotide cycle form the mechanistic basis for DNA recombination by continuous HJ branch migration. Branch migration allows RuvC to scan DNA until it finds its consensus sequence, where it cleaves and resolves cruciform DNA. This Pediococcus pentosaceus (strain ATCC 25745 / CCUG 21536 / LMG 10740 / 183-1w) protein is Holliday junction branch migration complex subunit RuvB.